Consider the following 196-residue polypeptide: GTP cyclohydrolase 1 (196 aa).

Zn(2+)-binding residues include Cys86, His89, and Cys158.

This sequence belongs to the GTP cyclohydrolase I family. In terms of assembly, toroid-shaped homodecamer, composed of two pentamers of five dimers.

The enzyme catalyses GTP + H2O = 7,8-dihydroneopterin 3'-triphosphate + formate + H(+). It participates in cofactor biosynthesis; 7,8-dihydroneopterin triphosphate biosynthesis; 7,8-dihydroneopterin triphosphate from GTP: step 1/1. The sequence is that of GTP cyclohydrolase 1 from Clostridium botulinum (strain Langeland / NCTC 10281 / Type F).